We begin with the raw amino-acid sequence, 22 residues long: 2.4 kDa venom peptide (22 aa).

Contains 2 disulfide bonds. Expressed by the venom gland.

It localises to the secreted. Functionally, not lethal to mice by intraperitoneal or intracerebroventricular injections in doses up to 150 micrograms. This Heterometrus spinifer (Asia giant forest scorpion) protein is 2.4 kDa venom peptide.